The chain runs to 236 residues: Phosphatidylserine decarboxylase proenzyme (236 aa).

The Schiff-base intermediate with substrate; via pyruvic acid role is filled by Ser-194. The residue at position 194 (Ser-194) is a Pyruvic acid (Ser); by autocatalysis.

The protein belongs to the phosphatidylserine decarboxylase family. PSD-A subfamily. Heterodimer of a large membrane-associated beta subunit and a small pyruvoyl-containing alpha subunit. Requires pyruvate as cofactor. Is synthesized initially as an inactive proenzyme. Formation of the active enzyme involves a self-maturation process in which the active site pyruvoyl group is generated from an internal serine residue via an autocatalytic post-translational modification. Two non-identical subunits are generated from the proenzyme in this reaction, and the pyruvate is formed at the N-terminus of the alpha chain, which is derived from the carboxyl end of the proenzyme. The post-translation cleavage follows an unusual pathway, termed non-hydrolytic serinolysis, in which the side chain hydroxyl group of the serine supplies its oxygen atom to form the C-terminus of the beta chain, while the remainder of the serine residue undergoes an oxidative deamination to produce ammonia and the pyruvoyl prosthetic group on the alpha chain.

Its subcellular location is the cell membrane. It catalyses the reaction a 1,2-diacyl-sn-glycero-3-phospho-L-serine + H(+) = a 1,2-diacyl-sn-glycero-3-phosphoethanolamine + CO2. The protein operates within phospholipid metabolism; phosphatidylethanolamine biosynthesis; phosphatidylethanolamine from CDP-diacylglycerol: step 2/2. Its function is as follows. Catalyzes the formation of phosphatidylethanolamine (PtdEtn) from phosphatidylserine (PtdSer). This Rhodospirillum rubrum (strain ATCC 11170 / ATH 1.1.1 / DSM 467 / LMG 4362 / NCIMB 8255 / S1) protein is Phosphatidylserine decarboxylase proenzyme.